The primary structure comprises 360 residues: Phospho-N-acetylmuramoyl-pentapeptide-transferase (360 aa).

Transmembrane regions (helical) follow at residues isoleucine 27–phenylalanine 47, threonine 71–valine 91, asparagine 94–valine 114, tryptophan 132–glycine 152, valine 168–serine 188, glycine 199–threonine 219, alanine 236–phenylalanine 256, valine 263–leucine 283, phenylalanine 288–valine 308, and valine 338–lysine 358.

This sequence belongs to the glycosyltransferase 4 family. MraY subfamily. The cofactor is Mg(2+).

The protein localises to the cell inner membrane. It catalyses the reaction UDP-N-acetyl-alpha-D-muramoyl-L-alanyl-gamma-D-glutamyl-meso-2,6-diaminopimeloyl-D-alanyl-D-alanine + di-trans,octa-cis-undecaprenyl phosphate = di-trans,octa-cis-undecaprenyl diphospho-N-acetyl-alpha-D-muramoyl-L-alanyl-D-glutamyl-meso-2,6-diaminopimeloyl-D-alanyl-D-alanine + UMP. Its pathway is cell wall biogenesis; peptidoglycan biosynthesis. In terms of biological role, catalyzes the initial step of the lipid cycle reactions in the biosynthesis of the cell wall peptidoglycan: transfers peptidoglycan precursor phospho-MurNAc-pentapeptide from UDP-MurNAc-pentapeptide onto the lipid carrier undecaprenyl phosphate, yielding undecaprenyl-pyrophosphoryl-MurNAc-pentapeptide, known as lipid I. The sequence is that of Phospho-N-acetylmuramoyl-pentapeptide-transferase from Photorhabdus laumondii subsp. laumondii (strain DSM 15139 / CIP 105565 / TT01) (Photorhabdus luminescens subsp. laumondii).